Reading from the N-terminus, the 714-residue chain is Calpain-1 catalytic subunit (714 aa).

Residues 55–354 (LFRDEAFPPV…FTRLEICNLT (300 aa)) enclose the Calpain catalytic domain. Q109 and D114 together coordinate Ca(2+). Residues C115, H272, and N296 contribute to the active site. S316, D318, and E323 together coordinate Ca(2+). The residue at position 354 (T354) is a Phosphothreonine. Positions 355–526 (PDALKSRTIR…KSAGTAELDD (172 aa)) are domain III. The segment at 527 to 542 (QIQANLPDEQVLSEEE) is linker. EF-hand domains follow at residues 541 to 576 (EEID…IISK), 585 to 618 (FSLE…NRIR), 615 to 650 (NRIR…AGFK), and 680 to 714 (VRLE…TMFA). A domain IV region spans residues 543–713 (IDENFKALFR…LFKWLQLTMF (171 aa)). D598, D600, N602, K604, E609, D628, D630, S632, S634, and E639 together coordinate Ca(2+).

Belongs to the peptidase C2 family. In terms of assembly, forms a heterodimer with a small (regulatory) subunit (CAPNS1). Ca(2+) serves as cofactor. In terms of processing, undergoes calcium-induced successive autoproteolytic cleavages that generate a membrane-bound 78 kDa active form and an intracellular 75 kDa active form. Calpastatin reduces with high efficiency the transition from 78 kDa to 75 kDa calpain forms. Ubiquitous.

The protein localises to the cytoplasm. The protein resides in the cell membrane. The catalysed reaction is Broad endopeptidase specificity.. With respect to regulation, activated by micromolar concentrations of calcium and inhibited by calpastatin. Functionally, calcium-regulated non-lysosomal thiol-protease which catalyze limited proteolysis of substrates involved in cytoskeletal remodeling and signal transduction. Proteolytically cleaves CTBP1. Cleaves and activates caspase-7 (CASP7). The chain is Calpain-1 catalytic subunit (CAPN1) from Macaca fascicularis (Crab-eating macaque).